A 235-amino-acid chain; its full sequence is BPI fold-containing family A member 2 (235 aa).

Residues 1–20 (MFQLGSLVVLCGLLIGNSES) form the signal peptide. Cys-161 and Cys-204 are oxidised to a cystine.

It belongs to the BPI/LBP/Plunc superfamily. Plunc family. In terms of tissue distribution, predominates in the parotid glands, present in smaller amounts (1/10) in the submaxillary glands and in the sublingual glands, and at lower amount in the pancreas but undetectable in the liver. Found also in lacrimal gland.

Its subcellular location is the secreted. Its function is as follows. Has strong antibacterial activity against P.aeruginosa. The polypeptide is BPI fold-containing family A member 2 (Bpifa2) (Mus musculus (Mouse)).